The sequence spans 325 residues: Ribose-phosphate pyrophosphokinase (325 aa).

ATP is bound by residues asparagine 45–glutamate 47 and arginine 104–glutamine 105. Positions 138 and 178 each coordinate Mg(2+). Lysine 202 is a catalytic residue. D-ribose 5-phosphate-binding positions include arginine 204, aspartate 230, and aspartate 234–threonine 238.

Belongs to the ribose-phosphate pyrophosphokinase family. Class I subfamily. In terms of assembly, homohexamer. It depends on Mg(2+) as a cofactor.

It localises to the cytoplasm. It catalyses the reaction D-ribose 5-phosphate + ATP = 5-phospho-alpha-D-ribose 1-diphosphate + AMP + H(+). Its pathway is metabolic intermediate biosynthesis; 5-phospho-alpha-D-ribose 1-diphosphate biosynthesis; 5-phospho-alpha-D-ribose 1-diphosphate from D-ribose 5-phosphate (route I): step 1/1. In terms of biological role, involved in the biosynthesis of the central metabolite phospho-alpha-D-ribosyl-1-pyrophosphate (PRPP) via the transfer of pyrophosphoryl group from ATP to 1-hydroxyl of ribose-5-phosphate (Rib-5-P). This is Ribose-phosphate pyrophosphokinase from Corynebacterium glutamicum (strain ATCC 13032 / DSM 20300 / JCM 1318 / BCRC 11384 / CCUG 27702 / LMG 3730 / NBRC 12168 / NCIMB 10025 / NRRL B-2784 / 534).